A 410-amino-acid chain; its full sequence is MDLTGLLLDEEGTFSLAGFQDFTFLPGHQKLSARIRRRLYYGWDWEADCSLEELSSPVADIAVELLQKAAPSPIRRLQKKYVAHVSREACISPCAMMLALVYIERLRHRNPDYLQHVSSSDLFLISMMVASKYLYDEGEEEEVFNDEWGAAGGVAVPTLNALERGFLSAMDWHLYTDPREIFEVLSWLESCVAEQQGRWRGWYTYTDLCVLLEQPTWQLALGSLCQRLVKLSCLLAVAYVSSVALAVASVAVIHQSLGLSCIPTPGPPDLGLTSRCLLEPCIPSVPQCLPSLANVSSCLEGSMGLRSLWGSLLASLTPPPLPPPDPPAPPTLLHNCHLCQKLQRDSPTCHACLHPNRTVPTALSSPWYHTYGLAPPWPWSPVLLSLPQPQQCSLFSVMELARLKSFVFPG.

Residues 233–253 (CLLAVAYVSSVALAVASVAVI) form a helical membrane-spanning segment.

Belongs to the CNPPD1 family.

It is found in the membrane. The chain is Protein CNPPD1 (CNPPD1) from Homo sapiens (Human).